The following is a 603-amino-acid chain: Elongation factor 4 (603 aa).

Positions 6 to 188 constitute a tr-type G domain; that stretch reads AHIRNFCIIA…SVVQNVPPPS (183 aa). Residues 18-23 and 135-138 contribute to the GTP site; these read DHGKST and NKID.

Belongs to the TRAFAC class translation factor GTPase superfamily. Classic translation factor GTPase family. LepA subfamily.

Its subcellular location is the cell inner membrane. The catalysed reaction is GTP + H2O = GDP + phosphate + H(+). Functionally, required for accurate and efficient protein synthesis under certain stress conditions. May act as a fidelity factor of the translation reaction, by catalyzing a one-codon backward translocation of tRNAs on improperly translocated ribosomes. Back-translocation proceeds from a post-translocation (POST) complex to a pre-translocation (PRE) complex, thus giving elongation factor G a second chance to translocate the tRNAs correctly. Binds to ribosomes in a GTP-dependent manner. The polypeptide is Elongation factor 4 (Myxococcus xanthus (strain DK1622)).